Consider the following 381-residue polypeptide: Gustatory and pheromone receptor 39a, isoform C (381 aa).

Residues 1–37 (MDFQPGELCAYYRLCRYLGIFCIDYNPTKKKFRLRRS) lie on the Cytoplasmic side of the membrane. Residues 38–58 (VLCYIVHFALQAYLVGCISVM) form a helical membrane-spanning segment. At 59–79 (VTYWRRCFKSELTTTGNHFDR) the chain is on the extracellular side. A helical membrane pass occupies residues 80–100 (LVMVIALGILVVQNAWLIWLQ). The Cytoplasmic portion of the chain corresponds to 101 to 129 (APHLRIVRQIEFYRRNHLANVRLLLPKRL). The helical transmembrane segment at 130–150 (LWLIIATNVVYMANFIKTCIF) threads the bilayer. Residues 151 to 171 (EWLTDASRLFVITSLGFPLRY) are Extracellular-facing. The helical transmembrane segment at 172-192 (LVTSFTMGTYFCMVHIVRLVL) threads the bilayer. Residues 193–239 (DWNQSQINAIIDESADLKMTSPNRLRLRVCLEMHDRLMLLCNDEISL) lie on the Cytoplasmic side of the membrane. The chain crosses the membrane as a helical span at residues 240–260 (VYGFIAWLSWMFASLDVTGVI). At 261–271 (YLTMVIQTKKS) the chain is on the extracellular side. A helical transmembrane segment spans residues 272–292 (IVLKLITNVVWLSPTFMTCAA). Residues 293–350 (SFMSNRVTIQANKTAKMLTKVPRTGTGLDRMIEKFLLKNLRQKPILTAYGFFALDKST) are Cytoplasmic-facing. The helical transmembrane segment at 351 to 371 (LFKLFTAIFTYMVILVQFKEM) threads the bilayer. At 372–381 (ENSTKSINKF) the chain is on the extracellular side. Residue Asn-373 is glycosylated (N-linked (GlcNAc...) asparagine).

The protein belongs to the insect chemoreceptor superfamily. Gustatory receptor (GR) family. Gr21a subfamily. Expressed in the adult labellar chemosensory neurons. In larvae, is expressed in neurons of the terminal external chemosensory organ, as well as in the dorsal pharyngeal sense organ.

It is found in the cell membrane. Functionally, gustatory receptor which mediates acceptance or avoidance behavior, depending on its substrates. Plays a role in sustaining courtship behavior in males, possibly through the reception of a stimulating arrestant pheromone. The sequence is that of Gustatory and pheromone receptor 39a, isoform C (Gr39a) from Drosophila melanogaster (Fruit fly).